Reading from the N-terminus, the 349-residue chain is Interferon regulatory factor 2 (349 aa).

A DNA-binding region (IRF tryptophan pentad repeat) is located at residues 5–113; it reads RMRMRPWLEE…NAFRVYRMLP (109 aa). N6-acetyllysine is present on residues lysine 75 and lysine 78. A Glycyl lysine isopeptide (Lys-Gly) (interchain with G-Cter in SUMO); alternate cross-link involves residue lysine 137. Lysine 137 is covalently cross-linked (Glycyl lysine isopeptide (Lys-Gly) (interchain with G-Cter in SUMO2); alternate). Lysine 166 participates in a covalent cross-link: Glycyl lysine isopeptide (Lys-Gly) (interchain with G-Cter in SUMO). A Phosphoserine modification is found at serine 225. The segment covering 230-239 has biased composition (polar residues); it reads YAESETTDSV. Residues 230–253 form a disordered region; it reads YAESETTDSVASDEENAEGRPHWR. Lysine 260 participates in a covalent cross-link: Glycyl lysine isopeptide (Lys-Gly) (interchain with G-Cter in SUMO2). Lysine 293 participates in a covalent cross-link: Glycyl lysine isopeptide (Lys-Gly) (interchain with G-Cter in SUMO). Residues 303–349 form a disordered region; that stretch reads SSWPPFTDLPLPAPVTPTPSSSRPDRETRASVIKKTSDITQARVKSC.

The protein belongs to the IRF family. In terms of assembly, interacts with BRD7, IRF2BP1 and IRF2BP2. Interacts with CREBBP in growing cells; the interaction acetylates IRF2 and regulates IRF2-dependent H4 promoter activity. Post-translationally, acetylated by CBP/ p300 during cell-growth. Acetylation on Lys-75 is required for stimulation of H4 promoter activity. In terms of processing, the major sites of sumoylation are Lys-137 and Lys-293. Sumoylation with SUMO1 increases its transcriptional repressor activity on IRF1 and diminishes its ability to activate ISRE and H4 promoter.

The protein localises to the nucleus. Functionally, specifically binds to the upstream regulatory region of type I IFN and IFN-inducible MHC class I genes (the interferon consensus sequence (ICS)) and represses those genes. Also acts as an activator for several genes including H4 and IL7. Constitutively binds to the ISRE promoter to activate IL7. Involved in cell cycle regulation through binding the site II (HiNF-M) promoter region of H4 and activating transcription during cell growth. Antagonizes IRF1 transcriptional activation. This is Interferon regulatory factor 2 (Irf2) from Mus musculus (Mouse).